The sequence spans 807 residues: Glycerol-3-phosphate acyltransferase (807 aa).

The HXXXXD motif signature appears at Cys308–Met313.

Belongs to the GPAT/DAPAT family.

Its subcellular location is the cell inner membrane. It carries out the reaction sn-glycerol 3-phosphate + an acyl-CoA = a 1-acyl-sn-glycero-3-phosphate + CoA. It participates in phospholipid metabolism; CDP-diacylglycerol biosynthesis; CDP-diacylglycerol from sn-glycerol 3-phosphate: step 1/3. This Shewanella putrefaciens (strain CN-32 / ATCC BAA-453) protein is Glycerol-3-phosphate acyltransferase.